Here is a 370-residue protein sequence, read N- to C-terminus: MPTPAHLSKDPRYFDFRAARRVPETHAWPGLHDHPVVDGSGAGGGPDAVPVVDMRDPCAAEAVALAAQDWGAFLLEGHGVPLELLARVEAAIAGMFALPASEKMRAVRRPGDSCGYGSPPISSFFSKCMWSEGYTFSPANLRSDLRKLWPKAGHDYRHFCAVMEEFHREMRALADKLLELFLVALGLTGEQVAAVESEQKIAETMTATMHLNWYPKCPDPKRALGLIAHTDSGFFTFVLQSLVPGLQLFRHGPDRWVTVPAVPGAMVVNVGDLFQILTNGRFHSVYHRAVVNRDSDRISLGYFLGPPAHVKVAPLREALAGTPAAYRAVTWPEYMGVRKKAFTTGASALKMVAISTDNDAANHTDDLISS.

In terms of domain architecture, Fe2OG dioxygenase spans 205–306; it reads MTATMHLNWY…RISLGYFLGP (102 aa). 3 residues coordinate Fe cation: histidine 229, aspartate 231, and histidine 287. Arginine 297 is a catalytic residue.

This sequence belongs to the iron/ascorbate-dependent oxidoreductase family. GA3OX subfamily. The cofactor is L-ascorbate. Fe cation serves as cofactor.

The enzyme catalyses gibberellin A20 + 2-oxoglutarate + O2 = gibberellin A1 + succinate + CO2. In terms of biological role, converts the inactive gibberellin precursors GA9 and GA20 in the bioactives gibberellins GA4 and GA1. The sequence is that of Gibberellin 3-beta-dioxygenase 2-2 (GA3ox2-2) from Triticum aestivum (Wheat).